Consider the following 300-residue polypeptide: Transcription factor DUO1 (300 aa).

HTH myb-type domains lie at 8 to 64 (KEEI…RPNL) and 65 to 116 (KNGC…KRLA). DNA-binding regions (H-T-H motif) lie at residues 36–60 (WSSI…VNKL) and 89–112 (WARI…SSRQ). Low complexity predominate over residues 123–135 (SDASSSSFNPKSS). The segment at 123–145 (SDASSSSFNPKSSSSHRLKGKNV) is disordered. Over residues 136–145 (SSHRLKGKNV) the composition is skewed to basic residues.

In terms of tissue distribution, confined to inflorescences, especially in stamens and pollen.

The protein localises to the nucleus. Functionally, transcription activator that acts as a positive regulator of male germline development by promoting both gametic cell specification and cell cycle progression. Binds to canonical MYB sites 5'-AACCGTC-3', 5'-AAACCGC-3' and 5'-AACCGT-3' in promoters to trigger the expression of male germline-specific or enriched genes (e.g. MGH3, GEX2 and GCS1), including those required for fertilization. Required for sperm cell specification leading to pollen maturation by activating a germline-specific regulon. Involved in pollen mitosis entry at G2-M transition via the regulation of CYCB1-1, DAZ1 and DAZ2 expression. This Arabidopsis thaliana (Mouse-ear cress) protein is Transcription factor DUO1.